We begin with the raw amino-acid sequence, 1081 residues long: Protein QUIRKY (1081 aa).

Positions 1-124 constitute a C2 1 domain; it reads MNTTPFHSDP…SRRGEEGLVY (124 aa). Disordered stretches follow at residues 154–198 and 238–323; these read DTAG…MNIP and PQHV…MEKK. Over residues 163–176 the composition is skewed to low complexity; it reads QQQQQQQQFHPPQQ. Positions 248-257 are enriched in basic and acidic residues; sequence NHPHRNDNHP. Residues 258–268 are compositionally biased toward pro residues; sequence QRPPSPPPPPS. 3 C2 domains span residues 318 to 440, 477 to 605, and 652 to 778; these read TTME…PQWY, SSDA…SKWH, and VCSD…TNSY. 4 residues coordinate Ca(2+): glutamate 351, serine 352, aspartate 408, and serine 413. Helical transmembrane passes span 879–899, 916–936, and 1024–1044; these read WYRIVGVLAWAVGLAKWLDNI, LVLVWYPDLVVPTAFLYVVMI, and LFIAICLVITIVLYAVPAKMV.

It belongs to the MCTP family. In terms of assembly, interacts with SUB/SCM and POQ at the plasma membrane. Binds to SUB/SCM at plasmodesmata (PD) in root epidermal cells to promote tissue morphogenesis. Ca(2+) serves as cofactor. In terms of tissue distribution, observed mainly in flowers, and, to a lower extent, in seedlings, roots, shoots, leaves, stems and inflorescences. Expressed in the vascular tissues of roots, cotyledons and rosette leaves. Accumulates in roots meristems.

It localises to the cell membrane. Its subcellular location is the cytoplasm. The protein resides in the golgi apparatus membrane. The protein localises to the cell junction. It is found in the plasmodesma. Functionally, may be involved in Ca 2(+)-dependent signaling and membrane trafficking. Plays a role in fruit dehiscence. Components of the machinery involved in organ development mediated by the receptor-like kinase STRUBBELIG (SUB). Collaboratively with SUB and POQ, regulates cell growth anisotropy during gynoecium development, thus linking together cell-cell communication and cellular growth. Together with SUB/SCM, links RLK-dependent signal transduction and intercellular communication mediated by plasmodesmata (PD) to regulate tissue morphogenesis. May function as a signaling molecule by regulating the trafficking of other regulators. The sequence is that of Protein QUIRKY from Arabidopsis thaliana (Mouse-ear cress).